Here is a 342-residue protein sequence, read N- to C-terminus: Methylthioribose-1-phosphate isomerase (342 aa).

Substrate contacts are provided by residues 49-51 (RGA), arginine 86, and glutamine 187. Aspartate 228 serves as the catalytic Proton donor. Residue 238-239 (NK) participates in substrate binding.

The protein belongs to the eIF-2B alpha/beta/delta subunits family. MtnA subfamily.

It catalyses the reaction 5-(methylsulfanyl)-alpha-D-ribose 1-phosphate = 5-(methylsulfanyl)-D-ribulose 1-phosphate. It participates in amino-acid biosynthesis; L-methionine biosynthesis via salvage pathway; L-methionine from S-methyl-5-thio-alpha-D-ribose 1-phosphate: step 1/6. Its function is as follows. Catalyzes the interconversion of methylthioribose-1-phosphate (MTR-1-P) into methylthioribulose-1-phosphate (MTRu-1-P). This is Methylthioribose-1-phosphate isomerase from Klebsiella pneumoniae (strain 342).